Consider the following 164-residue polypeptide: Cytochrome c-type biogenesis protein CcmE (164 aa).

Over 1–8 (MNPRRKQR) the chain is Cytoplasmic. Residues 9–29 (LAVVGIIGFLIVSAVGLMLYA) traverse the membrane as a helical; Signal-anchor for type II membrane protein segment. The Periplasmic segment spans residues 30–164 (LNDSIDLFYT…YESSNGAGSK (135 aa)). Heme-binding residues include His128 and Tyr132. The disordered stretch occupies residues 142–164 (KGIKHVKPENMPTYESSNGAGSK). Polar residues predominate over residues 154 to 164 (TYESSNGAGSK).

The protein belongs to the CcmE/CycJ family.

The protein resides in the cell inner membrane. In terms of biological role, heme chaperone required for the biogenesis of c-type cytochromes. Transiently binds heme delivered by CcmC and transfers the heme to apo-cytochromes in a process facilitated by CcmF and CcmH. The polypeptide is Cytochrome c-type biogenesis protein CcmE (Alteromonas mediterranea (strain DSM 17117 / CIP 110805 / LMG 28347 / Deep ecotype)).